Here is a 415-residue protein sequence, read N- to C-terminus: Protein fuzzy homolog (415 aa).

It belongs to the fuzzy family. In terms of assembly, component of the CPLANE (ciliogenesis and planar polarity effectors) complex, composed of INTU, FUZ and WDPCP. Interacts with CPLANE1. Interacts with CPLANE2. In terms of tissue distribution, expressed in dermal and epidermal cells.

The protein resides in the cytoplasm. It is found in the cytoskeleton. Its subcellular location is the cilium basal body. In terms of biological role, probable planar cell polarity effector involved in cilium biogenesis. May regulate protein and membrane transport to the cilium. Proposed to function as core component of the CPLANE (ciliogenesis and planar polarity effectors) complex involved in the recruitment of peripheral IFT-A proteins to basal bodies. May regulate the morphogenesis of hair follicles which depends on functional primary cilia. Binds phosphatidylinositol 3-phosphate with highest affinity, followed by phosphatidylinositol 4-phosphate and phosphatidylinositol 5-phosphate. This Mus musculus (Mouse) protein is Protein fuzzy homolog (Fuz).